Here is a 571-residue protein sequence, read N- to C-terminus: Proline--tRNA ligase (571 aa).

The protein belongs to the class-II aminoacyl-tRNA synthetase family. ProS type 1 subfamily. In terms of assembly, homodimer.

It localises to the cytoplasm. It carries out the reaction tRNA(Pro) + L-proline + ATP = L-prolyl-tRNA(Pro) + AMP + diphosphate. Catalyzes the attachment of proline to tRNA(Pro) in a two-step reaction: proline is first activated by ATP to form Pro-AMP and then transferred to the acceptor end of tRNA(Pro). As ProRS can inadvertently accommodate and process non-cognate amino acids such as alanine and cysteine, to avoid such errors it has two additional distinct editing activities against alanine. One activity is designated as 'pretransfer' editing and involves the tRNA(Pro)-independent hydrolysis of activated Ala-AMP. The other activity is designated 'posttransfer' editing and involves deacylation of mischarged Ala-tRNA(Pro). The misacylated Cys-tRNA(Pro) is not edited by ProRS. In Pseudomonas aeruginosa (strain LESB58), this protein is Proline--tRNA ligase.